The primary structure comprises 192 residues: Inosine triphosphate pyrophosphatase (192 aa).

10-15 contacts ITP; the sequence is TGNANK. Glu46 provides a ligand contact to Mg(2+). ITP is bound by residues Lys58, 74 to 75, Lys91, 149 to 152, Lys172, and 177 to 178; these read DT, FGWD, and HR.

This sequence belongs to the HAM1 NTPase family. In terms of assembly, homodimer. Mg(2+) is required as a cofactor. Mn(2+) serves as cofactor.

The protein localises to the cytoplasm. It localises to the nucleus. It catalyses the reaction ITP + H2O = IMP + diphosphate + H(+). The enzyme catalyses dITP + H2O = dIMP + diphosphate + H(+). The catalysed reaction is XTP + H2O = XMP + diphosphate + H(+). Its function is as follows. Pyrophosphatase that hydrolyzes non-canonical purine nucleotides such as inosine triphosphate (ITP), deoxyinosine triphosphate (dITP) or xanthosine 5'-triphosphate (XTP) to their respective monophosphate derivatives. The enzyme does not distinguish between the deoxy- and ribose forms. Probably excludes non-canonical purines from RNA and DNA precursor pools, thus preventing their incorporation into RNA and DNA and avoiding chromosomal lesions. This chain is Inosine triphosphate pyrophosphatase, found in Puccinia graminis f. sp. tritici (strain CRL 75-36-700-3 / race SCCL) (Black stem rust fungus).